The chain runs to 119 residues: Ribonuclease P protein component (119 aa).

This sequence belongs to the RnpA family. As to quaternary structure, consists of a catalytic RNA component (M1 or rnpB) and a protein subunit.

It carries out the reaction Endonucleolytic cleavage of RNA, removing 5'-extranucleotides from tRNA precursor.. In terms of biological role, RNaseP catalyzes the removal of the 5'-leader sequence from pre-tRNA to produce the mature 5'-terminus. It can also cleave other RNA substrates such as 4.5S RNA. The protein component plays an auxiliary but essential role in vivo by binding to the 5'-leader sequence and broadening the substrate specificity of the ribozyme. This is Ribonuclease P protein component from Bacillus pumilus (strain SAFR-032).